The primary structure comprises 207 residues: Pyridoxine/pyridoxamine 5'-phosphate oxidase (207 aa).

Residues 53 to 58 (RMVLLK), 68 to 69 (YT), K75, and Q97 each bind FMN. K58 is a binding site for substrate. Substrate is bound by residues Y115, R119, and S123. Residues 132–133 (QS) and W177 each bind FMN. Residue 183-185 (RLH) participates in substrate binding. R187 serves as a coordination point for FMN.

The protein belongs to the pyridoxamine 5'-phosphate oxidase family. Homodimer. FMN is required as a cofactor.

The catalysed reaction is pyridoxamine 5'-phosphate + O2 + H2O = pyridoxal 5'-phosphate + H2O2 + NH4(+). It catalyses the reaction pyridoxine 5'-phosphate + O2 = pyridoxal 5'-phosphate + H2O2. It participates in cofactor metabolism; pyridoxal 5'-phosphate salvage; pyridoxal 5'-phosphate from pyridoxamine 5'-phosphate: step 1/1. The protein operates within cofactor metabolism; pyridoxal 5'-phosphate salvage; pyridoxal 5'-phosphate from pyridoxine 5'-phosphate: step 1/1. Catalyzes the oxidation of either pyridoxine 5'-phosphate (PNP) or pyridoxamine 5'-phosphate (PMP) into pyridoxal 5'-phosphate (PLP). The protein is Pyridoxine/pyridoxamine 5'-phosphate oxidase of Bartonella quintana (strain Toulouse) (Rochalimaea quintana).